Consider the following 430-residue polypeptide: Aspartate aminotransferase, mitochondrial (430 aa).

A mitochondrion-targeting transit peptide spans 1-29; sequence MALLHSGRALPGIAAAFHPGLAAAASARA. Thr-48 is subject to Phosphothreonine. Lys-59 is subject to N6-acetyllysine. Residue Gly-65 participates in substrate binding. Lys-73 is subject to N6-acetyllysine; alternate. Lys-73 carries the post-translational modification N6-succinyllysine; alternate. Lys-82 is modified (N6-acetyllysine). N6-acetyllysine; alternate is present on Lys-90. At Lys-90 the chain carries N6-succinyllysine; alternate. Tyr-96 is subject to 3'-nitrotyrosine; alternate. Tyr-96 is modified (phosphotyrosine; alternate). Lys-107 and Lys-122 each carry N6-acetyllysine; alternate. Lys-107 and Lys-122 each carry N6-succinyllysine; alternate. Ser-143 carries the phosphoserine modification. At Lys-159 the chain carries N6-acetyllysine; alternate. Residue Lys-159 is modified to N6-succinyllysine; alternate. A substrate-binding site is contributed by Trp-162. Residue Lys-185 is modified to N6-acetyllysine; alternate. Position 185 is an N6-succinyllysine; alternate (Lys-185). Asn-215 is a binding site for substrate. Lys-227 bears the N6-succinyllysine mark. Lys-234 bears the N6-acetyllysine mark. 2 positions are modified to N6-acetyllysine; alternate: Lys-279 and Lys-296. Lys-279 is subject to N6-(pyridoxal phosphate)lysine; alternate. Lys-296 carries the N6-succinyllysine; alternate modification. Lys-302 carries the N6-acetyllysine modification. An N6-acetyllysine; alternate modification is found at Lys-309. Lys-309 carries the post-translational modification N6-succinyllysine; alternate. Arg-313 bears the Asymmetric dimethylarginine mark. Phosphothreonine is present on Thr-333. Lys-338 carries the N6-acetyllysine; alternate modification. Lys-338 bears the N6-succinyllysine; alternate mark. Residue Lys-345 is modified to N6-acetyllysine. Lys-363 carries the N6-acetyllysine; alternate modification. The residue at position 363 (Lys-363) is an N6-succinyllysine; alternate. Residues Lys-364 and Lys-387 each carry the N6-acetyllysine modification. 2 positions are modified to N6-acetyllysine; alternate: Lys-396 and Lys-404. 2 positions are modified to N6-succinyllysine; alternate: Lys-396 and Lys-404. Arg-407 provides a ligand contact to substrate.

The protein belongs to the class-I pyridoxal-phosphate-dependent aminotransferase family. Homodimer. It depends on pyridoxal 5'-phosphate as a cofactor.

It localises to the mitochondrion matrix. The protein resides in the cell membrane. The enzyme catalyses L-aspartate + 2-oxoglutarate = oxaloacetate + L-glutamate. It catalyses the reaction L-kynurenine + 2-oxoglutarate = kynurenate + L-glutamate + H2O. Catalyzes the irreversible transamination of the L-tryptophan metabolite L-kynurenine to form kynurenic acid (KA). As a member of the malate-aspartate shuttle, it has a key role in the intracellular NAD(H) redox balance. Is important for metabolite exchange between mitochondria and cytosol, and for amino acid metabolism. Facilitates cellular uptake of long-chain free fatty acids. This is Aspartate aminotransferase, mitochondrial (GOT2) from Pongo abelii (Sumatran orangutan).